The following is a 122-amino-acid chain: MGFRVLVLIVMVTTSALPFTFSEESGRSPFRPALRSEEAQALRHGLTLLLARRADGQPSDMRQPEMRRPEMRRPEVRRPEVRQPEFAESPVGQKRWDVNDCIHFCLIGVVGRSYTECHTMCT.

The N-terminal stretch at 1 to 22 (MGFRVLVLIVMVTTSALPFTFS) is a signal peptide. The propeptide occupies 23-96 (EESGRSPFRP…AESPVGQKRW (74 aa)). A disordered region spans residues 53–91 (RADGQPSDMRQPEMRRPEMRRPEVRRPEVRQPEFAESPV). A compositionally biased stretch (basic and acidic residues) spans 62 to 85 (RQPEMRRPEMRRPEVRRPEVRQPE). Intrachain disulfides connect cysteine 101–cysteine 121 and cysteine 105–cysteine 117.

This sequence belongs to the conotoxin R superfamily. As to expression, expressed by the venom duct.

The protein localises to the secreted. The sequence is that of Conotoxin flf14.2 from Conus anabathrum floridanus (Florida cone).